Consider the following 757-residue polypeptide: RNA-directed RNA polymerase catalytic subunit (757 aa).

The interval Ser-50–Tyr-82 is disordered. Polar residues predominate over residues Trp-55 to Pro-64. Short sequence motifs (nuclear localization signal) lie at residues Arg-187–Met-195 and Arg-203–Ile-216. Residues Arg-249–Glu-256 are promoter-binding site. Positions Val-286–Tyr-483 constitute a RdRp catalytic domain.

This sequence belongs to the influenza viruses polymerase PB1 family. In terms of assembly, influenza RNA polymerase is composed of three subunits: PB1, PB2 and PA. Interacts (via N-terminus) with PA (via C-terminus). Interacts (via C-terminus) with PB2 (via N-terminus); this interaction is essential for transcription initiation. In terms of processing, phosphorylated by host PRKCA.

It is found in the host nucleus. The protein localises to the host cytoplasm. The catalysed reaction is RNA(n) + a ribonucleoside 5'-triphosphate = RNA(n+1) + diphosphate. Functionally, RNA-dependent RNA polymerase which is responsible for replication and transcription of virus RNA segments. The transcription of viral mRNAs occurs by a unique mechanism called cap-snatching. 5' methylated caps of cellular mRNAs are cleaved after 10-13 nucleotides by PA. In turn, these short capped RNAs are used as primers by PB1 for transcription of viral mRNAs. During virus replication, PB1 initiates RNA synthesis and copy vRNA into complementary RNA (cRNA) which in turn serves as a template for the production of more vRNAs. The sequence is that of RNA-directed RNA polymerase catalytic subunit from Influenza A virus (strain A/Leningrad/134/17/1957 H2N2).